Consider the following 119-residue polypeptide: C-C motif chemokine 24 (119 aa).

Residues 1-26 (MAGSATIVAGLLLLVACACCIFPIDS) form the signal peptide. Intrachain disulfides connect cysteine 33-cysteine 58 and cysteine 34-cysteine 74. Asparagine 54 and asparagine 115 each carry an N-linked (GlcNAc...) asparagine glycan. Residues 96 to 119 (PSKGAKAVRTKFAVQRRRGNSTEV) are disordered. Residues 101–119 (KAVRTKFAVQRRRGNSTEV) show a composition bias toward basic residues.

Belongs to the intercrine beta (chemokine CC) family. As to expression, highest expression in jejunum and spleen. Lower levels found in liver and lung. No expression detected in kidney, thymus, brain or testis.

It localises to the secreted. Chemotactic for resting T-lymphocytes, and eosinophils. Has lower chemotactic activity for neutrophils but none for monocytes and activated lymphocytes. Is a strong suppressor of colony formation by a multipotential hematopoietic progenitor cell line. Binds to CCR3. This is C-C motif chemokine 24 from Mus musculus (Mouse).